The sequence spans 154 residues: Large ribosomal subunit protein uL13 (154 aa).

Belongs to the universal ribosomal protein uL13 family. As to quaternary structure, part of the 50S ribosomal subunit.

Its function is as follows. This protein is one of the early assembly proteins of the 50S ribosomal subunit, although it is not seen to bind rRNA by itself. It is important during the early stages of 50S assembly. The sequence is that of Large ribosomal subunit protein uL13 from Agrobacterium fabrum (strain C58 / ATCC 33970) (Agrobacterium tumefaciens (strain C58)).